The following is a 149-amino-acid chain: Large ribosomal subunit protein uL15 (149 aa).

Residues 1 to 61 form a disordered region; it reads MELNSLRPAL…GGQMPLQRRL (61 aa). Basic residues predominate over residues 30 to 39; that stretch reads TATKGHKGQK.

The protein belongs to the universal ribosomal protein uL15 family. Part of the 50S ribosomal subunit.

Functionally, binds to the 23S rRNA. The sequence is that of Large ribosomal subunit protein uL15 from Trichlorobacter lovleyi (strain ATCC BAA-1151 / DSM 17278 / SZ) (Geobacter lovleyi).